A 364-amino-acid polypeptide reads, in one-letter code: MAQRWGPQKLAGGQPQAGFEDSTQASIFTYTNNNATRDPFEGPNYHIAPRWVYHVTSAWMIFVVIASVFTNGLVLAATMRFKKLRHPLNWILVNLAVADLAETIIASTISVVNQIYGYFVLGHPMCVVEGYTVSLCGITGLWSLAIISWERWMVVCKPFGNVRFDAKLAVAGIAFSWIWAAVWTAPPIFGWSRYWPHGLKTSCGPDVFSGSSYPGVQSYMIVLMITCCIIPLSVIVLCYLQVWLAIRAVAKQQKESESTQKAEKEVTRMVMVMVFAFCLCWGPYTFFACFAAAHPGYAFHPLVAALPAYFAKSATIYNPIIYVFMNRQFRNCILQLFGKKVDDSSELSSVSKTEASSVSSVSPA.

Residues 1–52 are Extracellular-facing; the sequence is MAQRWGPQKLAGGQPQAGFEDSTQASIFTYTNNNATRDPFEGPNYHIAPRWV. An O-linked (GlcNAc) serine glycan is attached at serine 22. Asparagine 34 is a glycosylation site (N-linked (GlcNAc...) asparagine). Residues 53 to 77 form a helical membrane-spanning segment; that stretch reads YHVTSAWMIFVVIASVFTNGLVLAA. At 78 to 89 the chain is on the cytoplasmic side; that stretch reads TMRFKKLRHPLN. Residues 90 to 115 form a helical membrane-spanning segment; sequence WILVNLAVADLAETIIASTISVVNQI. The Extracellular segment spans residues 116-129; it reads YGYFVLGHPMCVVE. A disulfide bridge connects residues cysteine 126 and cysteine 203. A helical membrane pass occupies residues 130 to 149; that stretch reads GYTVSLCGITGLWSLAIISW. The Cytoplasmic segment spans residues 150 to 168; sequence ERWMVVCKPFGNVRFDAKL. The chain crosses the membrane as a helical span at residues 169-192; that stretch reads AVAGIAFSWIWAAVWTAPPIFGWS. Residues 193-218 lie on the Extracellular side of the membrane; sequence RYWPHGLKTSCGPDVFSGSSYPGVQS. Residues 219 to 246 traverse the membrane as a helical segment; that stretch reads YMIVLMITCCIIPLSVIVLCYLQVWLAI. The Cytoplasmic portion of the chain corresponds to 247 to 268; sequence RAVAKQQKESESTQKAEKEVTR. The chain crosses the membrane as a helical span at residues 269 to 292; the sequence is MVMVMVFAFCLCWGPYTFFACFAA. The Extracellular portion of the chain corresponds to 293-300; sequence AHPGYAFH. The chain crosses the membrane as a helical span at residues 301-325; that stretch reads PLVAALPAYFAKSATIYNPIIYVFM. Lysine 312 carries the N6-(retinylidene)lysine modification. The Cytoplasmic portion of the chain corresponds to 326-364; that stretch reads NRQFRNCILQLFGKKVDDSSELSSVSKTEASSVSSVSPA.

This sequence belongs to the G-protein coupled receptor 1 family. Opsin subfamily. Post-translationally, phosphorylated on some or all of the serine and threonine residues present in the C-terminal region. In terms of tissue distribution, the three color pigments are found in the cone photoreceptor cells. Expressed in retina.

It localises to the membrane. In terms of biological role, visual pigments are the light-absorbing molecules that mediate vision. They consist of an apoprotein, opsin, covalently linked to cis-retinal. The chain is Long-wave-sensitive opsin 1 (OPN1LW) from Equus caballus (Horse).